A 143-amino-acid chain; its full sequence is Deoxyuridine 5'-triphosphate nucleotidohydrolase (143 aa).

Belongs to the dUTPase family. The cofactor is Mg(2+).

The catalysed reaction is dUTP + H2O = dUMP + diphosphate + H(+). Functionally, this enzyme is involved in nucleotide metabolism: it produces dUMP, the immediate precursor of thymidine nucleotides and it decreases the intracellular concentration of dUTP so that uracil cannot be incorporated into DNA. The chain is Deoxyuridine 5'-triphosphate nucleotidohydrolase (DUT) from Yaba monkey tumor virus (strain VR587) (YMTV).